We begin with the raw amino-acid sequence, 369 residues long: Protein arginine N-methyltransferase 1-A (369 aa).

The region spanning 48-369 is the SAM-dependent MTase PRMT-type domain; sequence KDYYFDSYAH…LSCSTDYRMR (322 aa). S-adenosyl-L-methionine is bound by residues histidine 61, arginine 70, glycine 94, glutamate 116, and glutamate 145. Residues glutamate 160 and glutamate 169 contribute to the active site.

It belongs to the class I-like SAM-binding methyltransferase superfamily. Protein arginine N-methyltransferase family. Homodimer. Homooctamer; individual homodimers associates to form a homooctamer and homooligomerization is required for proper localization to the cell membrane. Individual homodimers can associate to form a homohexamer. Component of a complex with lsm14a/rap55a. Interacts with cirbp.

Its subcellular location is the nucleus. It localises to the nucleoplasm. It is found in the cytoplasm. The protein localises to the cytosol. The catalysed reaction is L-arginyl-[protein] + 2 S-adenosyl-L-methionine = N(omega),N(omega)-dimethyl-L-arginyl-[protein] + 2 S-adenosyl-L-homocysteine + 2 H(+). The enzyme catalyses L-arginyl-[protein] + S-adenosyl-L-methionine = N(omega)-methyl-L-arginyl-[protein] + S-adenosyl-L-homocysteine + H(+). It carries out the reaction N(omega)-methyl-L-arginyl-[protein] + S-adenosyl-L-methionine = N(omega),N(omega)-dimethyl-L-arginyl-[protein] + S-adenosyl-L-homocysteine + H(+). Arginine methyltransferase that methylates (mono and asymmetric dimethylation) the guanidino nitrogens of arginyl residues present in target proteins. Constitutes the main enzyme that mediates monomethylation and asymmetric dimethylation of histone H4 'Arg-4' (H4R3me1 and H4R3me2a, respectively), a specific tag for epigenetic transcriptional activation. Methylates cirbp to regulate its subcellular location. Acts transiently during metamorphosis as a transcription coactivator, enhancing thyroid hormone (T3) receptor (TR)-mediated transcription by enhancing TR binding to the T3 response element (TRE), and histone modification through recruitment of other coactivators. In Xenopus laevis (African clawed frog), this protein is Protein arginine N-methyltransferase 1-A (prmt1-a).